A 203-amino-acid polypeptide reads, in one-letter code: Large ribosomal subunit protein bL25 (203 aa).

This sequence belongs to the bacterial ribosomal protein bL25 family. CTC subfamily. In terms of assembly, part of the 50S ribosomal subunit; part of the 5S rRNA/L5/L18/L25 subcomplex. Contacts the 5S rRNA. Binds to the 5S rRNA independently of L5 and L18.

Functionally, this is one of the proteins that binds to the 5S RNA in the ribosome where it forms part of the central protuberance. This is Large ribosomal subunit protein bL25 from Rickettsia peacockii (strain Rustic).